We begin with the raw amino-acid sequence, 309 residues long: Mas-related G-protein coupled receptor member E (309 aa).

Residues 1–21 (MSLRVHTHSPSTQGDMAFNLT) lie on the Extracellular side of the membrane. N-linked (GlcNAc...) asparagine glycosylation is present at Asn19. The helical transmembrane segment at 22 to 42 (ILSLTELLSLGGLLGNGVALW) threads the bilayer. Topologically, residues 43-59 (LLNQNVYRNPFSIYLLD) are cytoplasmic. Residues 60–80 (VACADLIFLCCHMVAIIPELL) form a helical membrane-spanning segment. Over 81–91 (QDQLNFPEFVH) the chain is Extracellular. A helical membrane pass occupies residues 92–112 (ISLIMLRFFCYIVGLSLLVAI). Topologically, residues 113-132 (STEQCLATLFPSGYLCRRPR) are cytoplasmic. Residues 133 to 153 (YLTTCVCAFIWVLCLLLDLLL) form a helical membrane-spanning segment. The Extracellular segment spans residues 154-168 (SGACTQFFGAPSYHL). Residues 169–189 (CGMLWLVVAVLLAALCCTMCV) form a helical membrane-spanning segment. The Cytoplasmic segment spans residues 190–212 (TSLLLLLRVERGPERHQPRGFPT). The chain crosses the membrane as a helical span at residues 213–233 (LVLLVILLFLFCGLPFGIFWL). Topologically, residues 234-247 (SKNLSWHTPLYFYH) are extracellular. An N-linked (GlcNAc...) asparagine glycan is attached at Asn236. The chain crosses the membrane as a helical span at residues 248–268 (FSFFMASVHSAAKPAIYFFLG). The Cytoplasmic segment spans residues 269–309 (STPGQRFQEPLRLVLQRALGDEAELGAVREASQGGLVDMTV).

It belongs to the G-protein coupled receptor 1 family. Mas subfamily.

The protein resides in the cell membrane. Orphan receptor. May regulate nociceptor function and/or development, including the sensation or modulation of pain. This is Mas-related G-protein coupled receptor member E (Mrgpre) from Rattus norvegicus (Rat).